A 171-amino-acid chain; its full sequence is MEKLPKKRVSKTKSQKLIHSLTTQKNRAFLKKISANEMLLELEKGAFKKNEAYFISDEEDKNYVLVPDNVISLLAENARKAFEARLRAELERDIITQAPIDFEDVREVSLQLLENLRQKDGNLPNINTLNFVKQIKKEHPNLFFNFDNMFKQPPFNENNFENFDNSDEENF.

It belongs to the UPF0763 family.

This is UPF0763 protein HPP12_0677 from Helicobacter pylori (strain P12).